Consider the following 70-residue polypeptide: Brevinin-1S (70 aa).

The signal sequence occupies residues methionine 1–cysteine 22. Residues glutamate 23–glutamate 44 constitute a propeptide that is removed on maturation. An intrachain disulfide couples cysteine 64 to cysteine 70.

This sequence belongs to the frog skin active peptide (FSAP) family. Brevinin subfamily. Expressed by the skin glands.

The protein resides in the secreted. Antimicrobial peptide. This chain is Brevinin-1S, found in Odorrana schmackeri (Schmacker's frog).